The chain runs to 496 residues: Glutamyl-tRNA(Gln) amidotransferase subunit A (496 aa).

Residues lysine 75 and serine 150 each act as charge relay system in the active site. The Acyl-ester intermediate role is filled by serine 174.

It belongs to the amidase family. GatA subfamily. As to quaternary structure, heterotrimer of A, B and C subunits.

The catalysed reaction is L-glutamyl-tRNA(Gln) + L-glutamine + ATP + H2O = L-glutaminyl-tRNA(Gln) + L-glutamate + ADP + phosphate + H(+). In terms of biological role, allows the formation of correctly charged Gln-tRNA(Gln) through the transamidation of misacylated Glu-tRNA(Gln) in organisms which lack glutaminyl-tRNA synthetase. The reaction takes place in the presence of glutamine and ATP through an activated gamma-phospho-Glu-tRNA(Gln). This chain is Glutamyl-tRNA(Gln) amidotransferase subunit A, found in Burkholderia thailandensis (strain ATCC 700388 / DSM 13276 / CCUG 48851 / CIP 106301 / E264).